Reading from the N-terminus, the 82-residue chain is RNA-binding protein Hfq (82 aa).

The Sm domain occupies 10 to 70 (DTFLNHVRKN…ISTIMPAQPV (61 aa)).

Belongs to the Hfq family. As to quaternary structure, homohexamer.

Functionally, RNA chaperone that binds small regulatory RNA (sRNAs) and mRNAs to facilitate mRNA translational regulation in response to envelope stress, environmental stress and changes in metabolite concentrations. Also binds with high specificity to tRNAs. In Parvibaculum lavamentivorans (strain DS-1 / DSM 13023 / NCIMB 13966), this protein is RNA-binding protein Hfq.